Consider the following 227-residue polypeptide: 2-C-methyl-D-erythritol 4-phosphate cytidylyltransferase (227 aa).

This sequence belongs to the IspD/TarI cytidylyltransferase family. IspD subfamily.

It carries out the reaction 2-C-methyl-D-erythritol 4-phosphate + CTP + H(+) = 4-CDP-2-C-methyl-D-erythritol + diphosphate. It functions in the pathway isoprenoid biosynthesis; isopentenyl diphosphate biosynthesis via DXP pathway; isopentenyl diphosphate from 1-deoxy-D-xylulose 5-phosphate: step 2/6. Catalyzes the formation of 4-diphosphocytidyl-2-C-methyl-D-erythritol from CTP and 2-C-methyl-D-erythritol 4-phosphate (MEP). In Tolumonas auensis (strain DSM 9187 / NBRC 110442 / TA 4), this protein is 2-C-methyl-D-erythritol 4-phosphate cytidylyltransferase.